Consider the following 320-residue polypeptide: Mycothiol acetyltransferase (320 aa).

N-acetyltransferase domains follow at residues 16–141 (RQVR…RSLR) and 152–320 (LQIR…AALA). A 1D-myo-inositol 2-(L-cysteinylamino)-2-deoxy-alpha-D-glucopyranoside-binding site is contributed by glutamate 36. Residues 80 to 82 (LVV) and 88 to 93 (RRGIAT) each bind acetyl-CoA. 1D-myo-inositol 2-(L-cysteinylamino)-2-deoxy-alpha-D-glucopyranoside contacts are provided by glutamate 179, lysine 229, and glutamate 239. Acetyl-CoA-binding positions include 243-245 (LGV) and 250-256 (QGRGLGR). Tyrosine 284 contributes to the 1D-myo-inositol 2-(L-cysteinylamino)-2-deoxy-alpha-D-glucopyranoside binding site. Acetyl-CoA is bound at residue 289 to 294 (NIAAVR).

Belongs to the acetyltransferase family. MshD subfamily. In terms of assembly, monomer.

The catalysed reaction is 1D-myo-inositol 2-(L-cysteinylamino)-2-deoxy-alpha-D-glucopyranoside + acetyl-CoA = mycothiol + CoA + H(+). Catalyzes the transfer of acetyl from acetyl-CoA to desacetylmycothiol (Cys-GlcN-Ins) to form mycothiol. The protein is Mycothiol acetyltransferase of Mycobacterium marinum (strain ATCC BAA-535 / M).